A 180-amino-acid polypeptide reads, in one-letter code: Large ribosomal subunit protein uL5c (180 aa).

This sequence belongs to the universal ribosomal protein uL5 family. In terms of assembly, part of the 50S ribosomal subunit; contacts the 5S rRNA.

It localises to the plastid. Its subcellular location is the chloroplast. In terms of biological role, binds 5S rRNA, forms part of the central protuberance of the 50S subunit. In Oltmannsiellopsis viridis (Marine flagellate), this protein is Large ribosomal subunit protein uL5c (rpl5).